The primary structure comprises 852 residues: Beta-galactosidase 8 (852 aa).

An N-terminal signal peptide occupies residues 1–29; that stretch reads MEIAAKMVKVRKMEMILLLILVIVVAATA. N31 is a glycosylation site (N-linked (GlcNAc...) asparagine). E188 functions as the Proton donor in the catalytic mechanism. E257 functions as the Nucleophile in the catalytic mechanism. 4 N-linked (GlcNAc...) asparagine glycosylation sites follow: N258, N475, N766, and N807. An SUEL-type lectin domain is found at 766–852; the sequence is NRTRPVLSLK…KSLAVEASCS (87 aa).

It belongs to the glycosyl hydrolase 35 family. In terms of tissue distribution, expressed in roots, flowers and siliques.

The protein localises to the secreted. It is found in the extracellular space. The protein resides in the apoplast. It carries out the reaction Hydrolysis of terminal non-reducing beta-D-galactose residues in beta-D-galactosides.. This is Beta-galactosidase 8 (BGAL8) from Arabidopsis thaliana (Mouse-ear cress).